A 531-amino-acid polypeptide reads, in one-letter code: UDP-glucuronosyltransferase 1A7 (531 aa).

The N-terminal stretch at 1–25 (MAPADVPASLPLGLCLLLASGFGHA) is a signal peptide. Asn71, Asn293, and Asn431 each carry an N-linked (GlcNAc...) asparagine glycan. The chain crosses the membrane as a helical span at residues 487–503 (LDVIGFLLAIVLTVVFI).

Belongs to the UDP-glycosyltransferase family. As to quaternary structure, homodimer. Homooligomer. Interacts with UGT1A1, UGT1A3, UGT1A4, UGT1A6, UGT1A8, UGT1A9 and UGT1A10 to form heterodimers.

It is found in the endoplasmic reticulum membrane. It catalyses the reaction glucuronate acceptor + UDP-alpha-D-glucuronate = acceptor beta-D-glucuronoside + UDP + H(+). It carries out the reaction 17alpha-estradiol + UDP-alpha-D-glucuronate = 17alpha-estradiol 3-O-(beta-D-glucuronate) + UDP + H(+). The enzyme catalyses prunetin + UDP-alpha-D-glucuronate = prunetin-5-O-beta-D-glucuronide + UDP. The catalysed reaction is 5-epi-5-F2t-IsoP + UDP-alpha-D-glucuronate = 5-epi-5-F2t-IsoP-glucuronide + UDP + H(+). It catalyses the reaction (E)-ferulate + UDP-alpha-D-glucuronate = (E)-ferulic acid beta-D-glucuronate ester + UDP. It carries out the reaction candesartan + UDP-alpha-D-glucuronate = candesartan O-beta-D-glucuronoside + UDP. The enzyme catalyses SN-38 + UDP-alpha-D-glucuronate = SN-38 O-beta-D-glucuronide + UDP + H(+). The catalysed reaction is mycophenolate + UDP-alpha-D-glucuronate = mycophenolate 7-O-beta-D-glucuronide + UDP + H(+). Functionally, UDP-glucuronosyltransferase (UGT) that catalyzes phase II biotransformation reactions in which lipophilic substrates are conjugated with glucuronic acid to increase the metabolite's water solubility, thereby facilitating excretion into either the urine or bile. Essential for the elimination and detoxification of drugs, xenobiotics and endogenous compounds. Catalyzes the glucuronidation of endogenous estrogen hormone epiestradiol. Involved in the glucuronidation of F2-isoprostane (5-epi-5-F2t-IsoP). Involved in the glucuronidation of the phytochemical ferulic acid at the carboxylic acid group. Also catalyzes the glucuronidation of the isoflavones genistein, daidzein, glycitein, formononetin, biochanin A and prunetin, which are phytoestrogens with anticancer and cardiovascular properties. Involved in the glucuronidation of the AGTR1 angiotensin receptor antagonist caderastan, a drug which can inhibit the effect of angiotensin II. Involved in the biotransformation of 7-ethyl-10-hydroxycamptothecin (SN-38), the pharmacologically active metabolite of the anticancer drug irinotecan. Also metabolizes mycophenolate, an immunosuppressive agent. The polypeptide is UDP-glucuronosyltransferase 1A7 (Rattus norvegicus (Rat)).